The following is a 304-amino-acid chain: Phosphatidylinositol mannoside acyltransferase (304 aa).

His-126 serves as the catalytic Proton acceptor. Hexadecanoyl-CoA is bound by residues His-126 and Arg-164. Residue Glu-200 is part of the active site. Residues Ser-206 and Glu-229 each contribute to the hexadecanoyl-CoA site.

It belongs to the LpxL/LpxM/LpxP family. In terms of assembly, monomer.

Its subcellular location is the cell inner membrane. The enzyme catalyses a 2,6-O-bis(alpha-D-mannopyranosyl)-1-phosphatidyl-1D-myo-inositol + an acyl-CoA = a 2-O-(alpha-D-mannosyl)-6-O-(6-O-acyl-alpha-D-mannosyl)-1-phosphatidyl-1D-myo-inositol + CoA. It carries out the reaction a 1,2-diacyl-sn-glycero-3-phospho-[alpha-D-mannopyranosyl-(1&lt;-&gt;6)-D-myo-inositol] + an acyl-CoA = a 1,2-diacyl-sn-glycero-3-phospho-[alpha-D-6-acyl-mannopyranosyl-(1&lt;-&gt;6)-D-myo-inositol] + CoA. It functions in the pathway phospholipid metabolism; phosphatidylinositol metabolism. Functionally, catalyzes the transfer of a palmitoyl moiety from palmitoyl-CoA to the 6-position of the mannose ring linked to the 2-position of myo-inositol in phosphatidyl-myo-inositol monomannoside (PIM1) or dimannoside (PIM2). The chain is Phosphatidylinositol mannoside acyltransferase from Mycolicibacterium smegmatis (strain ATCC 700084 / mc(2)155) (Mycobacterium smegmatis).